The following is a 384-amino-acid chain: 1-deoxy-D-xylulose 5-phosphate reductoisomerase (384 aa).

The NADPH site is built by Thr-10, Gly-11, Ser-12, Ile-13, Arg-37, Asn-38, and Asn-124. Lys-125 is a binding site for 1-deoxy-D-xylulose 5-phosphate. Residue Glu-126 participates in NADPH binding. Residue Asp-150 participates in Mn(2+) binding. Ser-151, Glu-152, Ser-176, and His-199 together coordinate 1-deoxy-D-xylulose 5-phosphate. Glu-152 contributes to the Mn(2+) binding site. Position 205 (Gly-205) interacts with NADPH. Ser-212, Asn-217, Lys-218, and Glu-221 together coordinate 1-deoxy-D-xylulose 5-phosphate. Glu-221 is a binding site for Mn(2+).

This sequence belongs to the DXR family. It depends on Mg(2+) as a cofactor. Mn(2+) serves as cofactor.

The catalysed reaction is 2-C-methyl-D-erythritol 4-phosphate + NADP(+) = 1-deoxy-D-xylulose 5-phosphate + NADPH + H(+). It functions in the pathway isoprenoid biosynthesis; isopentenyl diphosphate biosynthesis via DXP pathway; isopentenyl diphosphate from 1-deoxy-D-xylulose 5-phosphate: step 1/6. Functionally, catalyzes the NADPH-dependent rearrangement and reduction of 1-deoxy-D-xylulose-5-phosphate (DXP) to 2-C-methyl-D-erythritol 4-phosphate (MEP). The polypeptide is 1-deoxy-D-xylulose 5-phosphate reductoisomerase (Clostridium perfringens (strain SM101 / Type A)).